The chain runs to 178 residues: Large ribosomal subunit protein eL20x (178 aa).

Belongs to the eukaryotic ribosomal protein eL20 family.

The protein is Large ribosomal subunit protein eL20x (RPL18AC) of Arabidopsis thaliana (Mouse-ear cress).